The chain runs to 443 residues: Probable glycine dehydrogenase (decarboxylating) subunit 1 (443 aa).

It belongs to the GcvP family. N-terminal subunit subfamily. As to quaternary structure, the glycine cleavage system is composed of four proteins: P, T, L and H. In this organism, the P 'protein' is a heterodimer of two subunits.

The enzyme catalyses N(6)-[(R)-lipoyl]-L-lysyl-[glycine-cleavage complex H protein] + glycine + H(+) = N(6)-[(R)-S(8)-aminomethyldihydrolipoyl]-L-lysyl-[glycine-cleavage complex H protein] + CO2. Functionally, the glycine cleavage system catalyzes the degradation of glycine. The P protein binds the alpha-amino group of glycine through its pyridoxal phosphate cofactor; CO(2) is released and the remaining methylamine moiety is then transferred to the lipoamide cofactor of the H protein. In Oleidesulfovibrio alaskensis (strain ATCC BAA-1058 / DSM 17464 / G20) (Desulfovibrio alaskensis), this protein is Probable glycine dehydrogenase (decarboxylating) subunit 1.